An 852-amino-acid polypeptide reads, in one-letter code: Disks large homolog 2 (852 aa).

Residues cysteine 5 and cysteine 7 are each lipidated (S-palmitoyl cysteine). At serine 28 the chain carries Phosphoserine. Tyrosine 58 carries the post-translational modification Phosphotyrosine. A Phosphoserine modification is found at serine 65. PDZ domains lie at 98–185 (EITL…RRRR) and 193–280 (EIKL…GKPT). 6 positions are modified to phosphoserine: serine 307, serine 328, serine 360, serine 365, serine 406, and serine 414. Residues 421 to 502 (KVVLHKGSTG…TVTIIAQYQP (82 aa)) enclose the PDZ 3 domain. At tyrosine 505 the chain carries Phosphotyrosine. Phosphoserine is present on residues serine 528, serine 530, and serine 553. The SH3 domain occupies 536–606 (KRSLYVRAMF…PSKRRVERKE (71 aa)). The 176-residue stretch at 662–837 (TRPVIILGPM…IYNQCKLVIE (176 aa)) folds into the Guanylate kinase-like domain. Phosphotyrosine is present on residues tyrosine 732 and tyrosine 737.

As to quaternary structure, interacts with NOS1/nNOS through second PDZ domain. Interacts with KCNJ2/Kir2.1 (via C-terminus) through one of its PDZ domains. Interacts with KCNJ4. Interacts with FRMPD4 (via C-terminus). Interacts through its PDZ domains with NETO1. Interacts with LRFN1, LRFN2 and LRFN4. Interacts with FASLG. Interacts with KCNJ4. Interacts with ADAM22. Interacts with DGKI (via PDZ-binding motif). In terms of processing, palmitoylation of isoform 1 and isoform 2 is not required for targeting to postsynaptic density. Brain. Highest levels of isoform 1 in cortex, olfactory bulb, thalamus, hypothalamus, striatum and hippocampus. Highest level of isoform 2 in olfactory bulb. Reduced levels in cortex and hippocampus. Highest level of isoform 4 in spinal cord. Low levels of isoform 4, isoform 6, and isoform 7 in superior cervical ganglion.

It is found in the cell membrane. It localises to the postsynaptic density. Its subcellular location is the synapse. The protein resides in the membrane. The protein localises to the cell projection. It is found in the axon. It localises to the perikaryon. In terms of biological role, required for perception of chronic pain through NMDA receptor signaling. Regulates surface expression of NMDA receptors in dorsal horn neurons of the spinal cord. Interacts with the cytoplasmic tail of NMDA receptor subunits as well as inward rectifying potassium channels. Involved in regulation of synaptic stability at cholinergic synapses. Part of the postsynaptic protein scaffold of excitatory synapses. The chain is Disks large homolog 2 (Dlg2) from Mus musculus (Mouse).